We begin with the raw amino-acid sequence, 206 residues long: Putative cryptic phosphonate transport system permease protein PhnE1 (206 aa).

Transmembrane regions (helical) follow at residues 30 to 50 (WFSLLSWAVVLAVLVVSWQGA), 92 to 112 (IAVWGTALAVVLSIPFGLMSA), and 137 to 157 (MVFAMLFVVAVGLGPFAGVLA).

As to quaternary structure, if the reading frame is restored, the complex is composed of two ATP-binding proteins (PhnC), two transmembrane proteins (PhnE) and a solute-binding protein (PhnD).

The protein localises to the cell inner membrane. Its function is as follows. N-terminal fragment of the PhnE protein, part of a phosphonate usage operon that is cryptic in K12 strains. Growth of K12 strains on phosphonate can be observed when it is used as the sole phosphorus source after a 60 hour lag period, suggesting the operon is activated. An intact PhnE in strain B is (AC A0A140NFA3). Part of the binding-protein-dependent transport system for phosphonates; probably responsible for the translocation of the substrate across the membrane. The sequence is that of Putative cryptic phosphonate transport system permease protein PhnE1 (phnE1) from Escherichia coli (strain K12).